The primary structure comprises 325 residues: Small ribosomal subunit protein uS4m (325 aa).

An S4 RNA-binding domain is found at 146–209 (KRIDMILLRS…HKQNLIHRLK (64 aa)).

Belongs to the universal ribosomal protein uS4 family.

The protein localises to the mitochondrion. This Dictyostelium citrinum (Slime mold) protein is Small ribosomal subunit protein uS4m (mrps4).